The sequence spans 738 residues: 1,4-alpha-glucan branching enzyme GlgB (738 aa).

Catalysis depends on aspartate 417, which acts as the Nucleophile. Glutamate 472 functions as the Proton donor in the catalytic mechanism.

Belongs to the glycosyl hydrolase 13 family. GlgB subfamily. In terms of assembly, monomer.

The enzyme catalyses Transfers a segment of a (1-&gt;4)-alpha-D-glucan chain to a primary hydroxy group in a similar glucan chain.. The protein operates within glycan biosynthesis; glycogen biosynthesis. Catalyzes the formation of the alpha-1,6-glucosidic linkages in glycogen by scission of a 1,4-alpha-linked oligosaccharide from growing alpha-1,4-glucan chains and the subsequent attachment of the oligosaccharide to the alpha-1,6 position. The sequence is that of 1,4-alpha-glucan branching enzyme GlgB from Burkholderia pseudomallei (strain 668).